The primary structure comprises 319 residues: MASSAAGCVVIVGSGVIGRSWAMLFASGGFQVKLYDIEQQQIRNALENIRKEMKLLEQAGSLKGSLSVEEQLSLISGCPNIQEAVEGAMHIQECVPEDLELKKKIFAQLDSIIDDRVILSSSTSCLMPSKLFAGLVHVKQCIVAHPVNPPYYIPLVELVPHPETAPTTVDRTHALMKKIGQCPMRVQKEVAGFVLNRLQYAIISEAWRLVEEGIVSPSDLDLVMSEGLGMRYAFIGPLETMHLNAEGMLSYCDRYSEGIKHVLQTFGPIPEFSRATAEKVNQDMCMKVPDDPEHLAARRQWRDECLMRLAKLKSQVQPQ.

N-acetylalanine is present on Ala2. Ser3 bears the Phosphoserine mark. Residues 16 to 17 (VI), Asp36, Glu97, and Lys102 contribute to the NAD(+) site. Ser111 bears the Phosphoserine mark.

This sequence belongs to the 3-hydroxyacyl-CoA dehydrogenase family. As to quaternary structure, homodimer. In terms of tissue distribution, widely expressed, with highest levels in liver and kidney.

Its subcellular location is the cytoplasm. It carries out the reaction L-gulonate + NAD(+) = 3-dehydro-L-gulonate + NADH + H(+). Its activity is regulated as follows. Inhibited by malonate. Functionally, has high L-gulonate 3-dehydrogenase activity. It also exhibits low dehydrogenase activity toward L-3-hydroxybutyrate (HBA) and L-threonate. This is Lambda-crystallin homolog (CRYL1) from Homo sapiens (Human).